Reading from the N-terminus, the 111-residue chain is Large ribosomal subunit protein uL23 (111 aa).

This sequence belongs to the universal ribosomal protein uL23 family. As to quaternary structure, part of the 50S ribosomal subunit. Contacts protein L29, and trigger factor when it is bound to the ribosome.

In terms of biological role, one of the early assembly proteins it binds 23S rRNA. One of the proteins that surrounds the polypeptide exit tunnel on the outside of the ribosome. Forms the main docking site for trigger factor binding to the ribosome. In Chlamydia trachomatis serovar L2 (strain ATCC VR-902B / DSM 19102 / 434/Bu), this protein is Large ribosomal subunit protein uL23.